The primary structure comprises 648 residues: Macrolide export ATP-binding/permease protein MacB (648 aa).

The 239-residue stretch at 5–243 (LELKDIRRSY…AGGTEPVVNT (239 aa)) folds into the ABC transporter domain. Residue 41-48 (GASGSGKS) coordinates ATP. The next 4 helical transmembrane spans lie at 273–293 (LLTM…VVVG), 523–543 (LFLT…VMNI), 576–596 (AVLV…LIAF), and 600–620 (LFLP…AFLC).

The protein belongs to the ABC transporter superfamily. Macrolide exporter (TC 3.A.1.122) family. Homodimer. Part of the tripartite efflux system MacAB-TolC, which is composed of an inner membrane transporter, MacB, a periplasmic membrane fusion protein, MacA, and an outer membrane component, TolC. The complex forms a large protein conduit and can translocate molecules across both the inner and outer membranes. Interacts with MacA.

It localises to the cell inner membrane. Its function is as follows. Part of the tripartite efflux system MacAB-TolC. MacB is a non-canonical ABC transporter that contains transmembrane domains (TMD), which form a pore in the inner membrane, and an ATP-binding domain (NBD), which is responsible for energy generation. Confers resistance against macrolides. In Shigella sonnei (strain Ss046), this protein is Macrolide export ATP-binding/permease protein MacB.